Consider the following 197-residue polypeptide: Lipoprotein signal peptidase (197 aa).

2 helical membrane-spanning segments follow: residues 73-93 and 97-117; these read SNAI…YLMI and TIGS…NLID. Active-site residues include D126 and D144. A helical transmembrane segment spans residues 135–155; it reads YSFPVFNLADCFITIGVIILI.

Belongs to the peptidase A8 family.

It is found in the cell inner membrane. It catalyses the reaction Release of signal peptides from bacterial membrane prolipoproteins. Hydrolyzes -Xaa-Yaa-Zaa-|-(S,diacylglyceryl)Cys-, in which Xaa is hydrophobic (preferably Leu), and Yaa (Ala or Ser) and Zaa (Gly or Ala) have small, neutral side chains.. It functions in the pathway protein modification; lipoprotein biosynthesis (signal peptide cleavage). Functionally, this protein specifically catalyzes the removal of signal peptides from prolipoproteins. This Rickettsia felis (strain ATCC VR-1525 / URRWXCal2) (Rickettsia azadi) protein is Lipoprotein signal peptidase.